Reading from the N-terminus, the 519-residue chain is Polyamine aminopropyltransferase (519 aa).

Helical transmembrane passes span 17-37, 53-73, 86-106, 109-129, 158-178, 180-200, and 208-228; these read LLLV…LALV, LIVA…KPFL, LLGL…AVVG, LWML…ELPL, LGAL…LGMM, GAAA…CVLL, and QFIR…TVLV. The segment at 200–463 is spermidine synthase; that stretch reads LRHLLPRAQF…FQLCGPEGTE (264 aa). One can recognise a PABS domain in the interval 225–459; that stretch reads TVLVRSDGIV…GDWGFQLCGP (235 aa). Glutamine 255 is a binding site for S-methyl-5'-thioadenosine. Aspartate 307 is a binding site for spermidine. S-methyl-5'-thioadenosine is bound by residues glutamate 326 and 358–359; that span reads DA. The active-site Proton acceptor is aspartate 379.

Belongs to the spermidine/spermine synthase family. Homodimer or homotetramer.

It localises to the cell membrane. It carries out the reaction S-adenosyl 3-(methylsulfanyl)propylamine + putrescine = S-methyl-5'-thioadenosine + spermidine + H(+). It participates in amine and polyamine biosynthesis; spermidine biosynthesis; spermidine from putrescine: step 1/1. Functionally, catalyzes the irreversible transfer of a propylamine group from the amino donor S-adenosylmethioninamine (decarboxy-AdoMet) to putrescine (1,4-diaminobutane) to yield spermidine. In Corynebacterium efficiens (strain DSM 44549 / YS-314 / AJ 12310 / JCM 11189 / NBRC 100395), this protein is Polyamine aminopropyltransferase.